The primary structure comprises 106 residues: NADH-quinone oxidoreductase subunit K (106 aa).

Helical transmembrane passes span 10-30 (IHYY…GVMV), 35-55 (VLIF…FVTF), and 67-87 (VVFF…AIVI).

It belongs to the complex I subunit 4L family. As to quaternary structure, NDH-1 is composed of 14 different subunits. Subunits NuoA, H, J, K, L, M, N constitute the membrane sector of the complex.

The protein localises to the cell inner membrane. It catalyses the reaction a quinone + NADH + 5 H(+)(in) = a quinol + NAD(+) + 4 H(+)(out). Functionally, NDH-1 shuttles electrons from NADH, via FMN and iron-sulfur (Fe-S) centers, to quinones in the respiratory chain. The immediate electron acceptor for the enzyme in this species is believed to be ubiquinone. Couples the redox reaction to proton translocation (for every two electrons transferred, four hydrogen ions are translocated across the cytoplasmic membrane), and thus conserves the redox energy in a proton gradient. In Leptospira borgpetersenii serovar Hardjo-bovis (strain JB197), this protein is NADH-quinone oxidoreductase subunit K.